The sequence spans 238 residues: 2,3,4,5-tetrahydropyridine-2,6-dicarboxylate N-acetyltransferase (238 aa).

The protein belongs to the transferase hexapeptide repeat family. DapH subfamily.

It carries out the reaction (S)-2,3,4,5-tetrahydrodipicolinate + acetyl-CoA + H2O = L-2-acetamido-6-oxoheptanedioate + CoA. Its pathway is amino-acid biosynthesis; L-lysine biosynthesis via DAP pathway; LL-2,6-diaminopimelate from (S)-tetrahydrodipicolinate (acetylase route): step 1/3. In terms of biological role, catalyzes the transfer of an acetyl group from acetyl-CoA to tetrahydrodipicolinate. The protein is 2,3,4,5-tetrahydropyridine-2,6-dicarboxylate N-acetyltransferase of Clostridioides difficile (strain 630) (Peptoclostridium difficile).